The sequence spans 704 residues: 1,4-alpha-glucan-branching enzyme (704 aa).

Residues W94 and K131 each coordinate (1,4-alpha-D-glucosyl)n. Phosphoserine is present on S190. D356 acts as the Nucleophile in catalysis. Catalysis depends on E417, which acts as the Proton donor.

It belongs to the glycosyl hydrolase 13 family. GlgB subfamily.

The protein resides in the cytoplasm. It carries out the reaction Transfers a segment of a (1-&gt;4)-alpha-D-glucan chain to a primary hydroxy group in a similar glucan chain.. Its pathway is glycan biosynthesis; glycogen biosynthesis. Its function is as follows. Glycogen-branching enzyme participates in the glycogen biosynthetic process along with glycogenin and glycogen synthase. Generates alpha-1,6-glucosidic branches from alpha-1,4-linked glucose chains, to increase solubility of the glycogen polymer. The sequence is that of 1,4-alpha-glucan-branching enzyme (GLC3) from Saccharomyces cerevisiae (strain ATCC 204508 / S288c) (Baker's yeast).